Consider the following 422-residue polypeptide: NADH-quinone oxidoreductase subunit F (422 aa).

Positions 1–26 are disordered; the sequence is MLKEEDKIFTNLHGQQSHDLKSSKKR. Residues 16-26 are compositionally biased toward basic and acidic residues; the sequence is QSHDLKSSKKR. 54 to 63 serves as a coordination point for NAD(+); it reads GRGGAGFSTG. 166 to 213 contacts FMN; it reads GAGAYICGEETALLESLEGKKGMPRLKPPFPAGFGLYGCPTTINNVES. Positions 344, 347, 350, and 390 each coordinate [4Fe-4S] cluster.

This sequence belongs to the complex I 51 kDa subunit family. FMN is required as a cofactor. [4Fe-4S] cluster serves as cofactor.

It catalyses the reaction a quinone + NADH + 5 H(+)(in) = a quinol + NAD(+) + 4 H(+)(out). Its function is as follows. NDH-1 shuttles electrons from NADH, via FMN and iron-sulfur (Fe-S) centers, to quinones in the respiratory chain. Couples the redox reaction to proton translocation (for every two electrons transferred, four hydrogen ions are translocated across the cytoplasmic membrane), and thus conserves the redox energy in a proton gradient. The polypeptide is NADH-quinone oxidoreductase subunit F (nuoF) (Rickettsia felis (strain ATCC VR-1525 / URRWXCal2) (Rickettsia azadi)).